The following is a 489-amino-acid chain: Rhamnulokinase (489 aa).

ATP is bound at residue A13 to R17. Cysteines 68 and 222 form a disulfide. Residues G83 and H236 to T238 contribute to the substrate site. D237 functions as the Proton acceptor in the catalytic mechanism. An ATP-binding site is contributed by T259. Position 296 (N296) interacts with substrate. Q304 lines the ATP pocket. The cysteines at positions 353 and 370 are disulfide-linked. Position 402 (G402) interacts with ATP. C413 and C417 are oxidised to a cystine.

This sequence belongs to the rhamnulokinase family. As to quaternary structure, monomer. Mg(2+) serves as cofactor.

It carries out the reaction L-rhamnulose + ATP = L-rhamnulose 1-phosphate + ADP + H(+). Its pathway is carbohydrate degradation; L-rhamnose degradation; glycerone phosphate from L-rhamnose: step 2/3. Its function is as follows. Involved in the catabolism of L-rhamnose (6-deoxy-L-mannose). Catalyzes the transfer of the gamma-phosphate group from ATP to the 1-hydroxyl group of L-rhamnulose to yield L-rhamnulose 1-phosphate. This chain is Rhamnulokinase, found in Escherichia coli O139:H28 (strain E24377A / ETEC).